Consider the following 183-residue polypeptide: Acireductone dioxygenase (183 aa).

Residues His-99, His-101, Glu-105, and His-144 each coordinate Fe(2+). His-99, His-101, Glu-105, and His-144 together coordinate Ni(2+).

This sequence belongs to the acireductone dioxygenase (ARD) family. As to quaternary structure, monomer. Fe(2+) serves as cofactor. Ni(2+) is required as a cofactor.

It catalyses the reaction 1,2-dihydroxy-5-(methylsulfanyl)pent-1-en-3-one + O2 = 3-(methylsulfanyl)propanoate + CO + formate + 2 H(+). The catalysed reaction is 1,2-dihydroxy-5-(methylsulfanyl)pent-1-en-3-one + O2 = 4-methylsulfanyl-2-oxobutanoate + formate + 2 H(+). The protein operates within amino-acid biosynthesis; L-methionine biosynthesis via salvage pathway; L-methionine from S-methyl-5-thio-alpha-D-ribose 1-phosphate: step 5/6. Catalyzes 2 different reactions between oxygen and the acireductone 1,2-dihydroxy-3-keto-5-methylthiopentene (DHK-MTPene) depending upon the metal bound in the active site. Fe-containing acireductone dioxygenase (Fe-ARD) produces formate and 2-keto-4-methylthiobutyrate (KMTB), the alpha-ketoacid precursor of methionine in the methionine recycle pathway. Ni-containing acireductone dioxygenase (Ni-ARD) produces methylthiopropionate, carbon monoxide and formate, and does not lie on the methionine recycle pathway. The chain is Acireductone dioxygenase from Microcystis aeruginosa.